The primary structure comprises 309 residues: Elongation factor Ts (309 aa).

Residues 82-85 (TDFV) are involved in Mg(2+) ion dislocation from EF-Tu.

The protein belongs to the EF-Ts family.

The protein resides in the cytoplasm. In terms of biological role, associates with the EF-Tu.GDP complex and induces the exchange of GDP to GTP. It remains bound to the aminoacyl-tRNA.EF-Tu.GTP complex up to the GTP hydrolysis stage on the ribosome. This is Elongation factor Ts from Rickettsia felis (strain ATCC VR-1525 / URRWXCal2) (Rickettsia azadi).